Reading from the N-terminus, the 360-residue chain is Mitogen-activated protein kinase 14 (360 aa).

Ser2 is subject to N-acetylserine. Ser2 carries the post-translational modification Phosphoserine. Thr16 bears the Phosphothreonine mark. A Protein kinase domain is found at 24 to 308; that stretch reads YQNLSPVGSG…AAQALAHAYF (285 aa). Residues 30 to 38 and Lys53 each bind ATP; that span reads VGSGAYGSV. Lys53 carries the N6-acetyllysine modification. Asp150 (proton acceptor) is an active-site residue. N6-acetyllysine is present on Lys152. Thr180 carries the phosphothreonine; by MAP2K3, MAP2K4, MAP2K6 and autocatalysis modification. Positions 180–182 match the TXY motif; it reads TGY. Tyr182 bears the Phosphotyrosine; by MAP2K3, MAP2K4, MAP2K6 and autocatalysis mark. The residue at position 263 (Thr263) is a Phosphothreonine. Tyr323 bears the Phosphotyrosine; by ZAP70 mark.

This sequence belongs to the protein kinase superfamily. CMGC Ser/Thr protein kinase family. MAP kinase subfamily. In terms of assembly, component of a signaling complex containing at least AKAP13, PKN1, MAPK14, ZAK and MAP2K3. Within this complex, AKAP13 interacts directly with PKN1, which in turn recruits MAPK14, MAP2K3 and ZAK. Binds to a kinase interaction motif within the protein tyrosine phosphatase, PTPRR. This interaction retains MAPK14 in the cytoplasm and prevents nuclear accumulation. Interacts with SPAG9 and GADD45A. Interacts with CDC25B, CDC25C, DUSP1, DUSP10, DUSP16, NP60, SUPT20H and TAB1. Interacts with casein kinase II subunits CSNK2A1 and CSNK2B. Interacts with PPM1D. Interacts with CDK5RAP3; recruits PPM1D to MAPK14 and may regulate its dephosphorylation. Interacts with DUSP2; this interaction does not lead to catalytic activation of DUSP2 and dephosphrylation of MAPK14. The cofactor is Mg(2+). Dually phosphorylated on Thr-180 and Tyr-182 by the MAP2Ks MAP2K3/MKK3, MAP2K4/MKK4 and MAP2K6/MKK6 in response to inflammatory citokines, environmental stress or growth factors, which activates the enzyme. Dual phosphorylation can also be mediated by TAB1-mediated autophosphorylation. TCR engagement in T-cells also leads to Tyr-323 phosphorylation by ZAP70. Dephosphorylated and inactivated by DUPS1, DUSP10 and DUSP16. PPM1D also mediates dephosphorylation and inactivation of MAPK14. In terms of processing, acetylated at Lys-53 and Lys-152 by KAT2B and EP300. Acetylation at Lys-53 increases the affinity for ATP and enhances kinase activity. Lys-53 and Lys-152 are deacetylated by HDAC3. Post-translationally, ubiquitinated. Ubiquitination leads to degradation by the proteasome pathway.

Its subcellular location is the cytoplasm. The protein localises to the nucleus. It catalyses the reaction L-seryl-[protein] + ATP = O-phospho-L-seryl-[protein] + ADP + H(+). The catalysed reaction is L-threonyl-[protein] + ATP = O-phospho-L-threonyl-[protein] + ADP + H(+). Activated by cell stresses such as DNA damage, heat shock, osmotic shock, anisomycin and sodium arsenite, as well as pro-inflammatory stimuli such as bacterial lipopolysaccharide (LPS) and interleukin-1. Activation occurs through dual phosphorylation of Thr-180 and Tyr-182 by either of two dual specificity kinases, MAP2K3/MKK3 or MAP2K6/MKK6, and potentially also MAP2K4/MKK4, as well as by TAB1-mediated autophosphorylation. MAPK14 phosphorylated on both Thr-180 and Tyr-182 is 10-20-fold more active than MAPK14 phosphorylated only on Thr-180, whereas MAPK14 phosphorylated on Tyr-182 alone is inactive. whereas Thr-180 is necessary for catalysis, Tyr-182 may be required for auto-activation and substrate recognition. Phosphorylated at Tyr-323 by ZAP70 in an alternative activation pathway in response to TCR signaling in T-cells. This alternative pathway is inhibited by GADD45A. Inhibited by dual specificity phosphatases, such as DUSP1, DUSP10, and DUSP16. Specifically inhibited by the binding of pyridinyl-imidazole compounds, which are cytokine-suppressive anti-inflammatory drugs (CSAID). SB203580 is an inhibitor of MAPK14. Serine/threonine kinase which acts as an essential component of the MAP kinase signal transduction pathway. MAPK14 is one of the four p38 MAPKs which play an important role in the cascades of cellular responses evoked by extracellular stimuli such as pro-inflammatory cytokines or physical stress leading to direct activation of transcription factors. Accordingly, p38 MAPKs phosphorylate a broad range of proteins and it has been estimated that they may have approximately 200 to 300 substrates each. Some of the targets are downstream kinases which are activated through phosphorylation and further phosphorylate additional targets. RPS6KA5/MSK1 and RPS6KA4/MSK2 can directly phosphorylate and activate transcription factors such as CREB1, ATF1, the NF-kappa-B isoform RELA/NFKB3, STAT1 and STAT3, but can also phosphorylate histone H3 and the nucleosomal protein HMGN1. RPS6KA5/MSK1 and RPS6KA4/MSK2 play important roles in the rapid induction of immediate-early genes in response to stress or mitogenic stimuli, either by inducing chromatin remodeling or by recruiting the transcription machinery. On the other hand, two other kinase targets, MAPKAPK2/MK2 and MAPKAPK3/MK3, participate in the control of gene expression mostly at the post-transcriptional level, by phosphorylating ZFP36 (tristetraprolin) and ELAVL1, and by regulating EEF2K, which is important for the elongation of mRNA during translation. MKNK1/MNK1 and MKNK2/MNK2, two other kinases activated by p38 MAPKs, regulate protein synthesis by phosphorylating the initiation factor EIF4E2. MAPK14 also interacts with casein kinase II, leading to its activation through autophosphorylation and further phosphorylation of TP53/p53. In the cytoplasm, the p38 MAPK pathway is an important regulator of protein turnover. For example, CFLAR is an inhibitor of TNF-induced apoptosis whose proteasome-mediated degradation is regulated by p38 MAPK phosphorylation. In a similar way, MAPK14 phosphorylates the ubiquitin ligase SIAH2, regulating its activity towards EGLN3. MAPK14 may also inhibit the lysosomal degradation pathway of autophagy by interfering with the intracellular trafficking of the transmembrane protein ATG9. Another function of MAPK14 is to regulate the endocytosis of membrane receptors by different mechanisms that impinge on the small GTPase RAB5A. In addition, clathrin-mediated EGFR internalization induced by inflammatory cytokines and UV irradiation depends on MAPK14-mediated phosphorylation of EGFR itself as well as of RAB5A effectors. Ectodomain shedding of transmembrane proteins is regulated by p38 MAPKs as well. In response to inflammatory stimuli, p38 MAPKs phosphorylate the membrane-associated metalloprotease ADAM17. Such phosphorylation is required for ADAM17-mediated ectodomain shedding of TGF-alpha family ligands, which results in the activation of EGFR signaling and cell proliferation. Another p38 MAPK substrate is FGFR1. FGFR1 can be translocated from the extracellular space into the cytosol and nucleus of target cells, and regulates processes such as rRNA synthesis and cell growth. FGFR1 translocation requires p38 MAPK activation. In the nucleus, many transcription factors are phosphorylated and activated by p38 MAPKs in response to different stimuli. Classical examples include ATF1, ATF2, ATF6, ELK1, PTPRH, DDIT3, TP53/p53 and MEF2C and MEF2A. The p38 MAPKs are emerging as important modulators of gene expression by regulating chromatin modifiers and remodelers. The promoters of several genes involved in the inflammatory response, such as IL6, IL8 and IL12B, display a p38 MAPK-dependent enrichment of histone H3 phosphorylation on 'Ser-10' (H3S10ph) in LPS-stimulated myeloid cells. This phosphorylation enhances the accessibility of the cryptic NF-kappa-B-binding sites marking promoters for increased NF-kappa-B recruitment. Phosphorylates CDC25B and CDC25C which is required for binding to 14-3-3 proteins and leads to initiation of a G2 delay after ultraviolet radiation. Phosphorylates TIAR following DNA damage, releasing TIAR from GADD45A mRNA and preventing mRNA degradation. The p38 MAPKs may also have kinase-independent roles, which are thought to be due to the binding to targets in the absence of phosphorylation. Protein O-Glc-N-acylation catalyzed by the OGT is regulated by MAPK14, and, although OGT does not seem to be phosphorylated by MAPK14, their interaction increases upon MAPK14 activation induced by glucose deprivation. This interaction may regulate OGT activity by recruiting it to specific targets such as neurofilament H, stimulating its O-Glc-N-acylation. Required in mid-fetal development for the growth of embryo-derived blood vessels in the labyrinth layer of the placenta. Also plays an essential role in developmental and stress-induced erythropoiesis, through regulation of EPO gene expression. Phosphorylates S100A9 at 'Thr-113'. The protein is Mitogen-activated protein kinase 14 of Canis lupus familiaris (Dog).